The primary structure comprises 790 residues: Kinesin-like protein KIF9 (790 aa).

Residues 6-340 (KVQAFVRVRP…LRFASRMKLV (335 aa)) enclose the Kinesin motor domain. ATP is bound by residues 12–14 (RVR) and 93–100 (GQTGAGKT). The stretch at 342–442 (TEPAINEKYD…EQEVESALRR (101 aa)) forms a coiled coil. A disordered region spans residues 482 to 521 (GVAPFSVKPGKKPKTKKTPKDQFSSSARKEGASSPVSGKD). A Phosphothreonine modification is found at threonine 530. Residues 547–577 (RERETSSIEPLISDSPKEELRAPRPSTPPSR) form a disordered region. Residues 600-695 (KSILNERKKR…YCQRLVDQCR (96 aa)) adopt a coiled-coil conformation.

It belongs to the TRAFAC class myosin-kinesin ATPase superfamily. Kinesin family. As to quaternary structure, interacts with HYDIN. As to expression, highly expressed in the testis (at protein level). Weakly expressed in the brain, thymus, lung and heart.

The protein localises to the cytoplasm. It is found in the cytoskeleton. Its subcellular location is the cell projection. It localises to the cilium. The protein resides in the flagellum. The protein localises to the flagellum axoneme. In terms of biological role, essential for normal male fertility and for progressive motility of spermatozoa. The chain is Kinesin-like protein KIF9 (Kif9) from Mus musculus (Mouse).